Consider the following 463-residue polypeptide: Chromosomal replication initiator protein DnaA (463 aa).

Residues Met1 to Val83 are domain I, interacts with DnaA modulators. The segment at Val83 to Ser126 is domain II. The domain III, AAA+ region stretch occupies residues Asn127–Ala343. Residues Gly171, Gly173, Lys174, and Thr175 each coordinate ATP. Positions Asn344–Ser463 are domain IV, binds dsDNA.

The protein belongs to the DnaA family. As to quaternary structure, oligomerizes as a right-handed, spiral filament on DNA at oriC.

The protein resides in the cytoplasm. Its function is as follows. Plays an essential role in the initiation and regulation of chromosomal replication. ATP-DnaA binds to the origin of replication (oriC) to initiate formation of the DNA replication initiation complex once per cell cycle. Binds the DnaA box (a 9 base pair repeat at the origin) and separates the double-stranded (ds)DNA. Forms a right-handed helical filament on oriC DNA; dsDNA binds to the exterior of the filament while single-stranded (ss)DNA is stabiized in the filament's interior. The ATP-DnaA-oriC complex binds and stabilizes one strand of the AT-rich DNA unwinding element (DUE), permitting loading of DNA polymerase. After initiation quickly degrades to an ADP-DnaA complex that is not apt for DNA replication. Binds acidic phospholipids. In Erwinia tasmaniensis (strain DSM 17950 / CFBP 7177 / CIP 109463 / NCPPB 4357 / Et1/99), this protein is Chromosomal replication initiator protein DnaA.